A 241-amino-acid chain; its full sequence is Tumor necrosis factor receptor superfamily member grnd (241 aa).

Positions 1-27 (MSVRKLSALSLSIGGVPLIPSVSLVAA) are cleaved as a signal peptide. The Extracellular segment spans residues 28–98 (ANGESRDCHG…EMLDIQNTQQ (71 aa)). 4 disulfides stabilise this stretch: Cys-35/Cys-47, Cys-40/Cys-54, Cys-57/Cys-77, and Cys-61/Cys-73. Asn-63 carries an N-linked (GlcNAc...) asparagine glycan. The chain crosses the membrane as a helical span at residues 99–119 (LILLLLTILLVLIALRCAFQF). Residues 120 to 241 (LRWLIGNRCF…PSAATIPVAF (122 aa)) lie on the Cytoplasmic side of the membrane.

Interacts (via extracellular cysteine-rich domain) with egr (via secreted TNF-homology soluble form); forms heterohexamers when 3 copies associate with egr trimers. Interacts with Traf6/TRAF2 and veli (via PDZ domain). Post-translationally, N-glycosylated on Asn-63. Glycosylation regulates ligand binding, specifically reducing affinity for the TNF egr, thereby inhibiting activation of JNK signaling. As to expression, expressed in the adult midgut; under normal conditions expressed at lower levels than the other TNF receptor wgn.

The protein resides in the apical cell membrane. It localises to the cytoplasmic vesicle membrane. Functionally, acts as a receptor for TNF-cytokine egr. Plays a role in activation of JNK signaling and is required for egr-induced apoptosis, including in wing imaginal discs during development. May also play an egr-independent role in cell proliferation. TNF receptor involved in triggering JNK-dependent proliferation of the enteroblast-enterocyte lineage in response to stress-induced release of egr by intestinal stem cells and enteroblasts. Involved in regulation of insulin production in response to dietary protein shortage keeping systemic growth in check. Activation in brain insulin producing cells through binding of egr released into the hemolymph in response to dietary amino acid shortage, results in JNK-dependent inhibition of insulin production. The sequence is that of Tumor necrosis factor receptor superfamily member grnd from Drosophila melanogaster (Fruit fly).